A 526-amino-acid polypeptide reads, in one-letter code: Glucose-6-phosphate isomerase (526 aa).

The Proton donor role is filled by Glu-343. Catalysis depends on residues His-374 and Lys-494.

Belongs to the GPI family.

The protein localises to the cytoplasm. The catalysed reaction is alpha-D-glucose 6-phosphate = beta-D-fructose 6-phosphate. The protein operates within carbohydrate biosynthesis; gluconeogenesis. It participates in carbohydrate degradation; glycolysis; D-glyceraldehyde 3-phosphate and glycerone phosphate from D-glucose: step 2/4. In terms of biological role, catalyzes the reversible isomerization of glucose-6-phosphate to fructose-6-phosphate. The protein is Glucose-6-phosphate isomerase of Dechloromonas aromatica (strain RCB).